Here is a 436-residue protein sequence, read N- to C-terminus: D-amino acid dehydrogenase (436 aa).

FAD is bound at residue 3–17 (IVVLGAGVVGVTSAY).

This sequence belongs to the DadA oxidoreductase family. Requires FAD as cofactor.

The catalysed reaction is a D-alpha-amino acid + A + H2O = a 2-oxocarboxylate + AH2 + NH4(+). It participates in amino-acid degradation; D-alanine degradation; NH(3) and pyruvate from D-alanine: step 1/1. In terms of biological role, oxidative deamination of D-amino acids. This chain is D-amino acid dehydrogenase, found in Cereibacter sphaeroides (strain ATCC 17029 / ATH 2.4.9) (Rhodobacter sphaeroides).